The chain runs to 307 residues: Cytochrome c1, heme protein, mitochondrial (307 aa).

The transit peptide at 1 to 56 directs the protein to the mitochondrion; the sequence is MFQFVKKKNEFLKFARLGSRAFTQNAQKTHSKGSNIALVSSSLLSVGMIALYYNVY. Topologically, residues 57-269 are mitochondrial intermembrane; that stretch reads GPSLSAGTPK…EPELDIRKKM (213 aa). One can recognise a Cytochrome c domain in the interval 89–259; it reads ASLRRGFQVY…DVVNFLHWAS (171 aa). Heme c-binding residues include Cys102, Cys105, His106, and Met225. The chain crosses the membrane as a helical span at residues 270–287; the sequence is GFQVITVLTILTALSMWY. Over 288 to 307 the chain is Mitochondrial matrix; it reads KRFKWTPIKNRKIFYQRPIK.

It belongs to the cytochrome c family. As to quaternary structure, component of the ubiquinol-cytochrome c oxidoreductase (cytochrome b-c1 complex, complex III, CIII), a multisubunit enzyme composed of 3 respiratory subunits cytochrome b, cytochrome c1 and Rieske protein, 2 core protein subunits, and additional low-molecular weight protein subunits. The complex exists as an obligatory dimer and forms supercomplexes (SCs) in the inner mitochondrial membrane with cytochrome c oxidase (complex IV, CIV). It depends on heme c as a cofactor.

Its subcellular location is the mitochondrion inner membrane. It carries out the reaction a quinol + 2 Fe(III)-[cytochrome c](out) = a quinone + 2 Fe(II)-[cytochrome c](out) + 2 H(+)(out). In terms of biological role, component of the ubiquinol-cytochrome c oxidoreductase, a multisubunit transmembrane complex that is part of the mitochondrial electron transport chain which drives oxidative phosphorylation. The respiratory chain contains 3 multisubunit complexes succinate dehydrogenase (complex II, CII), ubiquinol-cytochrome c oxidoreductase (cytochrome b-c1 complex, complex III, CIII) and cytochrome c oxidase (complex IV, CIV), that cooperate to transfer electrons derived from NADH and succinate to molecular oxygen, creating an electrochemical gradient over the inner membrane that drives transmembrane transport and the ATP synthase. The cytochrome b-c1 complex catalyzes electron transfer from ubiquinol to cytochrome c, linking this redox reaction to translocation of protons across the mitochondrial inner membrane, with protons being carried across the membrane as hydrogens on the quinol. In the process called Q cycle, 2 protons are consumed from the matrix, 4 protons are released into the intermembrane space and 2 electrons are passed to cytochrome c. Cytochrome c1 is a catalytic core subunit containing a c-type heme. It transfers electrons from the [2Fe-2S] iron-sulfur cluster of the Rieske protein to cytochrome c. The sequence is that of Cytochrome c1, heme protein, mitochondrial (cyt1) from Schizosaccharomyces pombe (strain 972 / ATCC 24843) (Fission yeast).